A 434-amino-acid polypeptide reads, in one-letter code: Trigger factor (434 aa).

A PPIase FKBP-type domain is found at 163–248 (GDRVTIDFEG…LTKIEAQHLP (86 aa)).

It belongs to the FKBP-type PPIase family. Tig subfamily.

Its subcellular location is the cytoplasm. The catalysed reaction is [protein]-peptidylproline (omega=180) = [protein]-peptidylproline (omega=0). In terms of biological role, involved in protein export. Acts as a chaperone by maintaining the newly synthesized protein in an open conformation. Functions as a peptidyl-prolyl cis-trans isomerase. The chain is Trigger factor from Methylibium petroleiphilum (strain ATCC BAA-1232 / LMG 22953 / PM1).